A 389-amino-acid polypeptide reads, in one-letter code: Zinc finger C2HC domain-containing protein 1C homolog (389 aa).

Disordered stretches follow at residues 16-44 and 84-115; these read MLPHNTTEAPGPHSAKQDSYEQGDSSQQS and SYPHCTGISQQDPESDSQGQGKGLFYSSGPQS. 2 stretches are compositionally biased toward polar residues: residues 35–44 and 90–102; these read YEQGDSSQQS and GISQQDPESDSQG. Positions 211 to 266 form a coiled coil; the sequence is VQIRRLEAAGESLEEEIRRKQILLRGKLKKTEEELRRIQMQKEQAKENENRELQKI. Disordered stretches follow at residues 301–320 and 343–389; these read REDETWGRSQQNSSPFQLSD and SELS…PQLG. Over residues 307-317 the composition is skewed to polar residues; the sequence is GRSQQNSSPFQ. The span at 368-382 shows a compositional bias: low complexity; it reads SSLSMAPDSSGSSGS.

It belongs to the ZC2HC1 family.

The polypeptide is Zinc finger C2HC domain-containing protein 1C homolog (ZC2HC1C) (Pongo abelii (Sumatran orangutan)).